We begin with the raw amino-acid sequence, 168 residues long: uncharacterized protein (168 aa).

A helical transmembrane segment spans residues 24–44 (FIGIVLFLAVLIIGILILILF). Disordered regions lie at residues 69-92 (SPSSSFLINNNNNNNNYHQNNNSN) and 142-168 (NNNNNNNNNPPTNISNKLNKNGETKNI). Positions 142 to 157 (NNNNNNNNNPPTNISN) are enriched in low complexity.

It is found in the membrane. This is an uncharacterized protein from Dictyostelium discoideum (Social amoeba).